The sequence spans 259 residues: Early E4 30 kDa protein (259 aa).

The protein belongs to the adenoviridae E4 30 to 34 kDa protein family. As to quaternary structure, interacts with E1B-55k.

It localises to the host nucleus. The protein resides in the host cytoplasm. Functionally, plays a major role to prevent cellular inhibition of viral genome replication by nuclear bodies. Assembles an SCF-like E3 ubiquitin ligase complex based on the cellular proteins ELOB, ELOC, CUL5 and RBX1, in cooperation with viral E1B-55K. This viral RING-type ligase ubiquitinates cellular substrates prior to proteasomal degradation: p53/TP53, LIG4, MRE11-RAD50-NBS1 (MRN) complex, ITGA3, DAXX and BLM. This is Early E4 30 kDa protein from Canine adenovirus serotype 2 (strain Toronto A 26-61) (CAdV-2).